The following is a 404-amino-acid chain: Probable tRNA sulfurtransferase (404 aa).

Positions 61–166 (EAVSERLKDV…SGYSYIMCDE (106 aa)) constitute a THUMP domain. ATP-binding positions include 184 to 185 (LL), 209 to 210 (HF), R266, G288, and Q297.

Belongs to the ThiI family.

It localises to the cytoplasm. It catalyses the reaction [ThiI sulfur-carrier protein]-S-sulfanyl-L-cysteine + a uridine in tRNA + 2 reduced [2Fe-2S]-[ferredoxin] + ATP + H(+) = [ThiI sulfur-carrier protein]-L-cysteine + a 4-thiouridine in tRNA + 2 oxidized [2Fe-2S]-[ferredoxin] + AMP + diphosphate. It carries out the reaction [ThiS sulfur-carrier protein]-C-terminal Gly-Gly-AMP + S-sulfanyl-L-cysteinyl-[cysteine desulfurase] + AH2 = [ThiS sulfur-carrier protein]-C-terminal-Gly-aminoethanethioate + L-cysteinyl-[cysteine desulfurase] + A + AMP + 2 H(+). It participates in cofactor biosynthesis; thiamine diphosphate biosynthesis. In terms of biological role, catalyzes the ATP-dependent transfer of a sulfur to tRNA to produce 4-thiouridine in position 8 of tRNAs, which functions as a near-UV photosensor. Also catalyzes the transfer of sulfur to the sulfur carrier protein ThiS, forming ThiS-thiocarboxylate. This is a step in the synthesis of thiazole, in the thiamine biosynthesis pathway. The sulfur is donated as persulfide by IscS. The polypeptide is Probable tRNA sulfurtransferase (Bacillus cereus (strain ATCC 14579 / DSM 31 / CCUG 7414 / JCM 2152 / NBRC 15305 / NCIMB 9373 / NCTC 2599 / NRRL B-3711)).